The primary structure comprises 351 residues: MTSPSHASDRGGGDGDSVENQSPELRKDPVTNRWVIFSPARAKRPTDFKSKSPQNPNPKPSSCPFCIGREQECAPELFRVPDHDPNWKLRVIENLYPALSRNLETQSTQPETGTSRTIVGFGFHDVVIESPVHSIQLSDIDPVGIGDILIAYKKRINQIAQHDSINYIQVFKNQGASAGASMSHSHSQMMALPVVPPTVSSRLDGTKDYFEETGKCCLCEAKSKHFVIDESSHFVSVAPFAATYPFEIWIIPKDHSSHFHHLDDVKAVDLGGLLKLMLQKIAKQLNDPPYNYMIHTSPLKVTESQLPYTHWFLQIVPQLSGVGGFEIGTGCYINPVFPEDVAKVMREVSLT.

The interval 1–63 (MTSPSHASDR…QNPNPKPSSC (63 aa)) is disordered. Residue 41–44 (RAKR) participates in ADP-alpha-D-glucose binding. Residues Cys63 and Cys66 each coordinate Zn(2+). ADP-alpha-D-glucose contacts are provided by residues 72-74 (ECA) and Asn94. His133 serves as a coordination point for Zn(2+). ADP-alpha-D-glucose is bound by residues Asn173 and 179–182 (GASM). His184 contacts Zn(2+). The Tele-AMP-histidine intermediate role is filled by His186. Residue Gln188 coordinates ADP-alpha-D-glucose. Positions 216, 219, 255, and 310 each coordinate Zn(2+). Residues Gly321 and 325–326 (FE) each bind ADP-alpha-D-glucose.

It belongs to the galactose-1-phosphate uridylyltransferase type 1 family. In terms of assembly, homodimer. Zn(2+) is required as a cofactor.

It catalyses the reaction alpha-D-glucose 1-phosphate + ADP + H(+) = ADP-alpha-D-glucose + phosphate. Its function is as follows. Catalyzes the conversion of ADP-glucose and inorganic phosphate (Pi) into glucose-1-phosphate and ADP. Does not possess galactose-1-phosphate uridylyltransferase activity. The chain is ADP-glucose phosphorylase from Arabidopsis thaliana (Mouse-ear cress).